We begin with the raw amino-acid sequence, 196 residues long: Putative 3-methyladenine DNA glycosylase (196 aa).

It belongs to the DNA glycosylase MPG family.

The chain is Putative 3-methyladenine DNA glycosylase from Chlorobium phaeobacteroides (strain DSM 266 / SMG 266 / 2430).